Here is an 860-residue protein sequence, read N- to C-terminus: Alpha,alpha-trehalose-phosphate synthase [UDP-forming] 6 (860 aa).

Position 5 is a phosphoserine (S5). A glycosyltransferase region spans residues 53 to 557 (DRIIIVANEL…ARSFLQDLER (505 aa)).

This sequence in the N-terminal section; belongs to the glycosyltransferase 20 family. In the C-terminal section; belongs to the trehalose phosphatase family. Binds to the phosphopeptide-binding site of GRF/14-3-3. Phosphorylated. As to expression, expressed in seedlings, leaves, stems, flowers, siliques and roots.

It catalyses the reaction D-glucose 6-phosphate + UDP-alpha-D-glucose = alpha,alpha-trehalose 6-phosphate + UDP + H(+). Its function is as follows. Regulates plant architecture, shape of epidermal pavement cells and branching of trichomes. In Arabidopsis thaliana (Mouse-ear cress), this protein is Alpha,alpha-trehalose-phosphate synthase [UDP-forming] 6.